Consider the following 122-residue polypeptide: Ribosome-binding factor A (122 aa).

The protein belongs to the RbfA family. As to quaternary structure, monomer. Binds 30S ribosomal subunits, but not 50S ribosomal subunits or 70S ribosomes.

Its subcellular location is the cytoplasm. In terms of biological role, one of several proteins that assist in the late maturation steps of the functional core of the 30S ribosomal subunit. Associates with free 30S ribosomal subunits (but not with 30S subunits that are part of 70S ribosomes or polysomes). Required for efficient processing of 16S rRNA. May interact with the 5'-terminal helix region of 16S rRNA. In Pelagibacter ubique (strain HTCC1062), this protein is Ribosome-binding factor A.